A 273-amino-acid chain; its full sequence is Putative phosphoenolpyruvate synthase regulatory protein (273 aa).

153–160 (GVSRSGKT) lines the ADP pocket.

Belongs to the pyruvate, phosphate/water dikinase regulatory protein family. PSRP subfamily.

The enzyme catalyses [pyruvate, water dikinase] + ADP = [pyruvate, water dikinase]-phosphate + AMP + H(+). It catalyses the reaction [pyruvate, water dikinase]-phosphate + phosphate + H(+) = [pyruvate, water dikinase] + diphosphate. In terms of biological role, bifunctional serine/threonine kinase and phosphorylase involved in the regulation of the phosphoenolpyruvate synthase (PEPS) by catalyzing its phosphorylation/dephosphorylation. The chain is Putative phosphoenolpyruvate synthase regulatory protein from Albidiferax ferrireducens (strain ATCC BAA-621 / DSM 15236 / T118) (Rhodoferax ferrireducens).